The chain runs to 255 residues: Kallikrein-15 (255 aa).

The signal sequence occupies residues 1 to 15 (MWLLLPLSFLLTSTA). Residues 16–20 (QDGGK) constitute a propeptide, activation peptide. A serine protease region spans residues 21–253 (LLEGEECAPH…YVKWIRETMK (233 aa)). A disulfide bridge links Cys46 with Cys62. Residues His61 and Asp105 each act as charge relay system in the active site. 3 cysteine pairs are disulfide-bonded: Cys137/Cys214, Cys179/Cys193, and Cys204/Cys229. Asn170 is a glycosylation site (N-linked (GlcNAc...) asparagine). Ser208 functions as the Charge relay system in the catalytic mechanism. An N-linked (GlcNAc...) asparagine glycan is attached at Asn231.

This sequence belongs to the peptidase S1 family. Kallikrein subfamily.

Its subcellular location is the secreted. Its function is as follows. Protease whose physiological substrate is not yet known. This is Kallikrein-15 (KLK15) from Saguinus oedipus (Cotton-top tamarin).